The primary structure comprises 311 residues: Histidine decarboxylase proenzyme (311 aa).

2 residues coordinate substrate: Asp-64 and Ser-82. Ser-83 is modified (pyruvic acid (Ser)). Glu-198 acts as the Proton donor in catalysis.

In terms of assembly, the proenzyme is a hexamer of identical pi chains; each pi chain monomer is cleaved to form a small (or beta) chain and a large (or alpha) chain by non-hydrolytic self-catalysis. Pyruvate is required as a cofactor.

It carries out the reaction L-histidine + H(+) = histamine + CO2. This chain is Histidine decarboxylase proenzyme (hdcA), found in Lactobacillus sp. (strain 30a).